The chain runs to 85 residues: uncharacterized protein (85 aa).

Helical transmembrane passes span 12-34 (ICLSVVTFSTSYSLDAGVVVLAF) and 49-71 (IPEFLWVTWQSFIKVLSLLNGFV).

The protein resides in the cell membrane. This is an uncharacterized protein from Archaeoglobus fulgidus (strain ATCC 49558 / DSM 4304 / JCM 9628 / NBRC 100126 / VC-16).